A 206-amino-acid polypeptide reads, in one-letter code: Methylthioribulose-1-phosphate dehydratase (206 aa).

Residues H96 and H98 each coordinate Zn(2+).

The protein belongs to the aldolase class II family. MtnB subfamily. The cofactor is Zn(2+).

The enzyme catalyses 5-(methylsulfanyl)-D-ribulose 1-phosphate = 5-methylsulfanyl-2,3-dioxopentyl phosphate + H2O. Its pathway is amino-acid biosynthesis; L-methionine biosynthesis via salvage pathway; L-methionine from S-methyl-5-thio-alpha-D-ribose 1-phosphate: step 2/6. Catalyzes the dehydration of methylthioribulose-1-phosphate (MTRu-1-P) into 2,3-diketo-5-methylthiopentyl-1-phosphate (DK-MTP-1-P). The protein is Methylthioribulose-1-phosphate dehydratase of Azotobacter vinelandii (strain DJ / ATCC BAA-1303).